Reading from the N-terminus, the 169-residue chain is Ribosome-binding factor A (169 aa).

Residues 124-169 (AGAKHAGDADPYKSDIPEDVEIDEDDFDEEDEDLIDDEELDEDGNK) are disordered. The span at 128–139 (HAGDADPYKSDI) shows a compositional bias: basic and acidic residues. Residues 140 to 169 (PEDVEIDEDDFDEEDEDLIDDEELDEDGNK) show a composition bias toward acidic residues.

The protein belongs to the RbfA family. As to quaternary structure, monomer. Binds 30S ribosomal subunits, but not 50S ribosomal subunits or 70S ribosomes.

Its subcellular location is the cytoplasm. In terms of biological role, one of several proteins that assist in the late maturation steps of the functional core of the 30S ribosomal subunit. Associates with free 30S ribosomal subunits (but not with 30S subunits that are part of 70S ribosomes or polysomes). Required for efficient processing of 16S rRNA. May interact with the 5'-terminal helix region of 16S rRNA. The protein is Ribosome-binding factor A of Arthrobacter sp. (strain FB24).